The following is a 223-amino-acid chain: Deoxyribose-phosphate aldolase (223 aa).

The active-site Proton donor/acceptor is the Asp89. Residue Lys152 is the Schiff-base intermediate with acetaldehyde of the active site. Lys181 functions as the Proton donor/acceptor in the catalytic mechanism.

The protein belongs to the DeoC/FbaB aldolase family. DeoC type 1 subfamily.

It localises to the cytoplasm. It catalyses the reaction 2-deoxy-D-ribose 5-phosphate = D-glyceraldehyde 3-phosphate + acetaldehyde. It participates in carbohydrate degradation; 2-deoxy-D-ribose 1-phosphate degradation; D-glyceraldehyde 3-phosphate and acetaldehyde from 2-deoxy-alpha-D-ribose 1-phosphate: step 2/2. Catalyzes a reversible aldol reaction between acetaldehyde and D-glyceraldehyde 3-phosphate to generate 2-deoxy-D-ribose 5-phosphate. The sequence is that of Deoxyribose-phosphate aldolase from Bacillus cereus (strain G9842).